Consider the following 677-residue polypeptide: Mitochondrial disaggregase (677 aa).

Residues 1–28 (MLGSLVSKRTAPAPRLLLQLLRSPSLRS) constitute a mitochondrion transit peptide. Residues 92–126 (PSPEDTLPGQDSWNGVLSRAGLGVWALATALVVHC) form an autoinhibitory region. 4 ANK repeats span residues 133 to 162 (SKDA…DVNA), 166 to 195 (LGWT…DPNL), 235 to 265 (KGCT…PLQR), and 268 to 297 (MGHT…EKQR). His-316, Ile-318, Ser-353, Gly-354, Ile-355, Gly-356, Lys-357, Thr-358, Glu-425, and Asn-466 together coordinate ATP. Positions 477 to 505 (LQLRQEALEMSRNRIAENLGDVQISDKIT) are regulatory; slows ATPase and disaggregase activities. Arg-531 lines the ATP pocket. An N6-acetyllysine modification is found at Lys-559. An ATP-binding site is contributed by Arg-590.

Belongs to the ClpA/ClpB family. In terms of assembly, homododecamer when substrate-bound; the homododecamer consists of 2 homohexamers stacked head-to-head via ANK repeat-mediated interactions. The active substrate-bound form is likely to exist in a dynamic equilibrium between homohexamers and homododecamers. Homotetradecamer in the unbound state which is remodeled upon substrate binding into the homododecamer. Interacts with PHB and PHB2. Interacts with MAVS; the interaction is enhanced by Sendai virus infection. In terms of processing, proteolytically cleaved by protease PARL. ATP-dependent protein disaggregase activity is stimulated by PARL-mediated cleavage of the N-terminal autoinhibitory peptide.

The protein resides in the mitochondrion intermembrane space. The enzyme catalyses ATP + H2O = ADP + phosphate + H(+). Its activity is regulated as follows. Disaggregase activity is inhibited by ADP. Functions as a regulatory ATPase and participates in secretion/protein trafficking process. Has ATP-dependent protein disaggregase activity and is required to maintain the solubility of key mitochondrial proteins. Involved in mitochondrial-mediated antiviral innate immunity, activates RIG-I-mediated signal transduction and production of IFNB1 and pro-inflammatory cytokine IL6. Plays a role in granulocyte differentiation. In Bos taurus (Bovine), this protein is Mitochondrial disaggregase.